Here is a 326-residue protein sequence, read N- to C-terminus: tRNA-modifying protein YgfZ (326 aa).

Folate-binding residues include tryptophan 27 and tryptophan 189.

The protein belongs to the tRNA-modifying YgfZ family.

Its subcellular location is the cytoplasm. Folate-binding protein involved in regulating the level of ATP-DnaA and in the modification of some tRNAs. It is probably a key factor in regulatory networks that act via tRNA modification, such as initiation of chromosomal replication. The protein is tRNA-modifying protein YgfZ of Escherichia coli O127:H6 (strain E2348/69 / EPEC).